Consider the following 405-residue polypeptide: Coenzyme F420 hydrogenase subunit alpha (405 aa).

Residues Cys63, Cys66, Cys380, and Cys383 each coordinate Ni(2+).

This sequence belongs to the [NiFe]/[NiFeSe] hydrogenase large subunit family. As to quaternary structure, heterocomplex of the form (alpha(1)beta(1)gamma(1))(8). Ni(2+) is required as a cofactor. The cofactor is iron-sulfur cluster. Requires FAD as cofactor.

It catalyses the reaction oxidized coenzyme F420-(gamma-L-Glu)(n) + H2 + H(+) = reduced coenzyme F420-(gamma-L-Glu)(n). Reduces the physiological low-potential two-electron acceptor coenzyme F420, and the artificial one-electron acceptor methylviologen. The protein is Coenzyme F420 hydrogenase subunit alpha (frhA) of Methanothermobacter thermautotrophicus (strain ATCC 29096 / DSM 1053 / JCM 10044 / NBRC 100330 / Delta H) (Methanobacterium thermoautotrophicum).